The primary structure comprises 311 residues: N-acetylmuramic acid 6-phosphate etherase (311 aa).

One can recognise an SIS domain in the interval 66 to 229 (VADRMARGGR…STITMIRLGK (164 aa)). Catalysis depends on E94, which acts as the Proton donor. E125 is a catalytic residue.

Belongs to the GCKR-like family. MurNAc-6-P etherase subfamily. As to quaternary structure, homodimer.

The catalysed reaction is N-acetyl-D-muramate 6-phosphate + H2O = N-acetyl-D-glucosamine 6-phosphate + (R)-lactate. It functions in the pathway amino-sugar metabolism; N-acetylmuramate degradation. Functionally, specifically catalyzes the cleavage of the D-lactyl ether substituent of MurNAc 6-phosphate, producing GlcNAc 6-phosphate and D-lactate. The protein is N-acetylmuramic acid 6-phosphate etherase of Streptomyces avermitilis (strain ATCC 31267 / DSM 46492 / JCM 5070 / NBRC 14893 / NCIMB 12804 / NRRL 8165 / MA-4680).